The chain runs to 502 residues: Probable malate:quinone oxidoreductase (502 aa).

Belongs to the MQO family. The cofactor is FAD.

The enzyme catalyses (S)-malate + a quinone = a quinol + oxaloacetate. It functions in the pathway carbohydrate metabolism; tricarboxylic acid cycle; oxaloacetate from (S)-malate (quinone route): step 1/1. This Parasynechococcus marenigrum (strain WH8102) protein is Probable malate:quinone oxidoreductase.